The following is a 301-amino-acid chain: Probable alpha-L-glutamate ligase 1 (301 aa).

One can recognise an ATP-grasp domain in the interval 104 to 287 (LQLLSRKGIG…VTEPIVEYIE (184 aa)). Residues lysine 141, 178 to 179 (EY), aspartate 187, and 211 to 213 (RSN) each bind ATP. Residues aspartate 248, glutamate 260, and asparagine 262 each contribute to the Mg(2+) site. 3 residues coordinate Mn(2+): aspartate 248, glutamate 260, and asparagine 262.

The protein belongs to the RimK family. The cofactor is Mg(2+). Requires Mn(2+) as cofactor.

This chain is Probable alpha-L-glutamate ligase 1, found in Shewanella oneidensis (strain ATCC 700550 / JCM 31522 / CIP 106686 / LMG 19005 / NCIMB 14063 / MR-1).